The primary structure comprises 189 residues: Protein GrpE (189 aa).

The segment covering 1 to 38 (MTKSNETERMEESEETHSSDIRSASESDHASGSDHTES) has biased composition (basic and acidic residues). The disordered stretch occupies residues 1–54 (MTKSNETERMEESEETHSSDIRSASESDHASGSDHTESADEIPTADAEQGELEQ).

This sequence belongs to the GrpE family. In terms of assembly, homodimer.

Its subcellular location is the cytoplasm. Functionally, participates actively in the response to hyperosmotic and heat shock by preventing the aggregation of stress-denatured proteins, in association with DnaK and GrpE. It is the nucleotide exchange factor for DnaK and may function as a thermosensor. Unfolded proteins bind initially to DnaJ; upon interaction with the DnaJ-bound protein, DnaK hydrolyzes its bound ATP, resulting in the formation of a stable complex. GrpE releases ADP from DnaK; ATP binding to DnaK triggers the release of the substrate protein, thus completing the reaction cycle. Several rounds of ATP-dependent interactions between DnaJ, DnaK and GrpE are required for fully efficient folding. This Tropheryma whipplei (strain TW08/27) (Whipple's bacillus) protein is Protein GrpE.